We begin with the raw amino-acid sequence, 215 residues long: Ribosomal RNA small subunit methyltransferase G (215 aa).

Residues G73, L78, 125–126, and R140 contribute to the S-adenosyl-L-methionine site; that span reads AE.

Belongs to the methyltransferase superfamily. RNA methyltransferase RsmG family.

The protein localises to the cytoplasm. Its function is as follows. Specifically methylates the N7 position of guanine in position 518 of 16S rRNA. This is Ribosomal RNA small subunit methyltransferase G from Renibacterium salmoninarum (strain ATCC 33209 / DSM 20767 / JCM 11484 / NBRC 15589 / NCIMB 2235).